A 661-amino-acid polypeptide reads, in one-letter code: Pseudouridylate synthase 7 homolog (661 aa).

Met-1 bears the N-acetylmethionine mark. Residues 1 to 97 (MEMTEMTGVS…GLSEECEEEE (97 aa)) form a disordered region. Ser-10 bears the Phosphoserine mark. Residues 36 to 52 (SECSLTKGQDGLQNDFL) show a composition bias toward polar residues. Positions 77-97 (QLEDEEEEEEDGLSEECEEEE) are enriched in acidic residues. Ser-127 is subject to Phosphoserine. Asp-294 (nucleophile) is an active-site residue. The region spanning 370 to 580 (GFINYYGMQR…SGAYRKIIIR (211 aa)) is the TRUD domain. Thr-610 carries the phosphothreonine modification.

It belongs to the pseudouridine synthase TruD family. As to quaternary structure, interacts with SIRT1.

The protein localises to the nucleus. The enzyme catalyses a uridine in tRNA = a pseudouridine in tRNA. It catalyses the reaction uridine(13) in tRNA = pseudouridine(13) in tRNA. It carries out the reaction a uridine in mRNA = a pseudouridine in mRNA. Pseudouridylate synthase that catalyzes pseudouridylation of RNAs. Acts as a regulator of protein synthesis in embryonic stem cells by mediating pseudouridylation of RNA fragments derived from tRNAs (tRFs): pseudouridylated tRFs inhibit translation by targeting the translation initiation complex. Also catalyzes pseudouridylation of mRNAs: mediates pseudouridylation of mRNAs with the consensus sequence 5'-UGUAG-3'. Acts as a regulator of pre-mRNA splicing by mediating pseudouridylation of pre-mRNAs at locations associated with alternatively spliced regions. Pseudouridylation of pre-mRNAs near splice sites directly regulates mRNA splicing and mRNA 3'-end processing. In addition to mRNAs and tRNAs, binds other types of RNAs, such as snRNAs, Y RNAs and vault RNAs, suggesting that it can catalyze pseudouridylation of many RNA types. The polypeptide is Pseudouridylate synthase 7 homolog (Homo sapiens (Human)).